Here is a 262-residue protein sequence, read N- to C-terminus: Hydroxyethylthiazole kinase (262 aa).

Residue Met50 participates in substrate binding. 2 residues coordinate ATP: Arg125 and Thr171. Residue Gly198 coordinates substrate.

This sequence belongs to the Thz kinase family. It depends on Mg(2+) as a cofactor.

It carries out the reaction 5-(2-hydroxyethyl)-4-methylthiazole + ATP = 4-methyl-5-(2-phosphooxyethyl)-thiazole + ADP + H(+). Its pathway is cofactor biosynthesis; thiamine diphosphate biosynthesis; 4-methyl-5-(2-phosphoethyl)-thiazole from 5-(2-hydroxyethyl)-4-methylthiazole: step 1/1. Its function is as follows. Catalyzes the phosphorylation of the hydroxyl group of 4-methyl-5-beta-hydroxyethylthiazole (THZ). This is Hydroxyethylthiazole kinase from Shigella flexneri serotype 5b (strain 8401).